Here is a 242-residue protein sequence, read N- to C-terminus: Carboxy-S-adenosyl-L-methionine synthase (242 aa).

S-adenosyl-L-methionine-binding positions include Tyr-39, 64–66, 89–90, 117–118, Asn-132, and Arg-199; these read GCS, DN, and DI.

The protein belongs to the class I-like SAM-binding methyltransferase superfamily. Cx-SAM synthase family. Homodimer.

The catalysed reaction is prephenate + S-adenosyl-L-methionine = carboxy-S-adenosyl-L-methionine + 3-phenylpyruvate + H2O. In terms of biological role, catalyzes the conversion of S-adenosyl-L-methionine (SAM) to carboxy-S-adenosyl-L-methionine (Cx-SAM). This Psychromonas ingrahamii (strain DSM 17664 / CCUG 51855 / 37) protein is Carboxy-S-adenosyl-L-methionine synthase.